Consider the following 383-residue polypeptide: Paralemmin-1 (383 aa).

N-acetylmethionine is present on Met-1. Residues 5–102 adopt a coiled-coil conformation; the sequence is ATDTASQQER…KEIDVLEFGE (98 aa). Disordered regions lie at residues 51-163, 242-295, and 334-375; these read RERW…GSTM, TLSE…GQEP, and ATPR…MKKP. Positions 69–96 are enriched in basic and acidic residues; the sequence is DMRKQMQEDEQKARGLEESITRLEKEID. Composition is skewed to polar residues over residues 109-124 and 133-143; these read KENS…QSAS and ETLVNAQQTPL. Residues Ser-116, Ser-122, and Ser-124 each carry the phosphoserine modification. A phosphothreonine mark is found at Thr-141, Thr-145, and Thr-153. Residues Ser-157 and Ser-161 each carry the phosphoserine modification. Thr-242 is modified (phosphothreonine). Residue Ser-244 is modified to Phosphoserine. The segment covering 257–273 has biased composition (basic and acidic residues); it reads GLAEDVTRTTPSRREIT. Residues 285–295 show a composition bias toward low complexity; that stretch reads GPPGIQPGQEP. Ser-345 carries the phosphoserine modification. Over residues 357 to 367 the composition is skewed to polar residues; the sequence is QTGPTTTPSDT. 3 positions are modified to phosphothreonine: Thr-361, Thr-362, and Thr-363. Position 365 is a phosphoserine (Ser-365). Thr-367 bears the Phosphothreonine mark. S-palmitoyl cysteine attachment occurs at residues Cys-377 and Cys-379. Position 380 is a cysteine methyl ester (Cys-380). Cys-380 carries S-farnesyl cysteine lipidation. Positions 381 to 383 are cleaved as a propeptide — removed in mature form; that stretch reads SVM.

It belongs to the paralemmin family. In terms of assembly, interacts with dopamine receptor DRD3. As to expression, expression is highest in brain, intermediate in adrenal gland and kidney, and much lower or undetectable in other tissues. Isoform 1 is the predominant isoform in most tissues except brain and kidney where isoform 2 predominates.

The protein localises to the cell membrane. Its subcellular location is the cell projection. The protein resides in the filopodium membrane. It is found in the axon. It localises to the dendrite. The protein localises to the dendritic spine. Its subcellular location is the basolateral cell membrane. The protein resides in the apicolateral cell membrane. Functionally, involved in plasma membrane dynamics and cell process formation. Isoform 1 and isoform 2 are necessary for axonal and dendritic filopodia induction, for dendritic spine maturation and synapse formation in a palmitoylation-dependent manner. The protein is Paralemmin-1 (Palm) of Mus musculus (Mouse).